The sequence spans 164 residues: Probable ubiquitin-conjugating enzyme E2 7 (164 aa).

Positions 3-163 (QSSLLLKKQL…VAQCVRRSQE (161 aa)) constitute a UBC core domain. Catalysis depends on Cys-88, which acts as the Glycyl thioester intermediate.

Belongs to the ubiquitin-conjugating enzyme family.

The enzyme catalyses S-ubiquitinyl-[E1 ubiquitin-activating enzyme]-L-cysteine + [E2 ubiquitin-conjugating enzyme]-L-cysteine = [E1 ubiquitin-activating enzyme]-L-cysteine + S-ubiquitinyl-[E2 ubiquitin-conjugating enzyme]-L-cysteine.. Its pathway is protein modification; protein ubiquitination. In terms of biological role, catalyzes the covalent attachment of ubiquitin to other proteins. This chain is Probable ubiquitin-conjugating enzyme E2 7 (ubc-7), found in Caenorhabditis elegans.